The chain runs to 370 residues: DNA polymerase IV (370 aa).

Residues 14–198 form the UmuC domain; the sequence is IIHIDMDAFF…LPIEKFYGVG (185 aa). The Mg(2+) site is built by D18 and D116. E117 is a catalytic residue.

Belongs to the DNA polymerase type-Y family. In terms of assembly, monomer. Mg(2+) serves as cofactor.

The protein resides in the cytoplasm. The catalysed reaction is DNA(n) + a 2'-deoxyribonucleoside 5'-triphosphate = DNA(n+1) + diphosphate. Poorly processive, error-prone DNA polymerase involved in untargeted mutagenesis. Copies undamaged DNA at stalled replication forks, which arise in vivo from mismatched or misaligned primer ends. These misaligned primers can be extended by PolIV. Exhibits no 3'-5' exonuclease (proofreading) activity. May be involved in translesional synthesis, in conjunction with the beta clamp from PolIII. The protein is DNA polymerase IV of Streptococcus mutans serotype c (strain ATCC 700610 / UA159).